Consider the following 353-residue polypeptide: Nicotinate-nucleotide--dimethylbenzimidazole phosphoribosyltransferase (353 aa).

Glutamate 318 acts as the Proton acceptor in catalysis.

It belongs to the CobT family.

The enzyme catalyses 5,6-dimethylbenzimidazole + nicotinate beta-D-ribonucleotide = alpha-ribazole 5'-phosphate + nicotinate + H(+). Its pathway is nucleoside biosynthesis; alpha-ribazole biosynthesis; alpha-ribazole from 5,6-dimethylbenzimidazole: step 1/2. Functionally, catalyzes the synthesis of alpha-ribazole-5'-phosphate from nicotinate mononucleotide (NAMN) and 5,6-dimethylbenzimidazole (DMB). This is Nicotinate-nucleotide--dimethylbenzimidazole phosphoribosyltransferase from Desulforudis audaxviator (strain MP104C).